A 373-amino-acid polypeptide reads, in one-letter code: XK-related protein 9 (373 aa).

Transmembrane regions (helical) follow at residues 8–28 (FMMS…DIWV), 38–58 (YVFS…AQCF), 166–186 (AAIM…QVAL), 203–223 (ITYL…VVLL), 224–244 (LFLN…LGII), 256–276 (CISM…FTFF), 295–315 (VLGT…IFNP), and 318–338 (FIPI…FLIV).

This sequence belongs to the XK family. Undergoes proteolytic processing by caspase-3 (CASP3), caspase-6 (CASP6) and caspase-7 (CASP7) to generate the XK-related protein 9, processed form, leading to its activation.

It is found in the cell membrane. The catalysed reaction is a 1,2-diacyl-sn-glycero-3-phospho-L-serine(in) = a 1,2-diacyl-sn-glycero-3-phospho-L-serine(out). With respect to regulation, activated upon caspase cleavage to generate the XK-related protein 9, processed form. Does not act prior the onset of apoptosis. Functionally, phospholipid scramblase that promotes phosphatidylserine exposure on apoptotic cell surface. Phosphatidylserine is a specific marker only present at the surface of apoptotic cells and acts as a specific signal for engulfment. In Homo sapiens (Human), this protein is XK-related protein 9.